Here is a 65-residue protein sequence, read N- to C-terminus: Large ribosomal subunit protein bL35 (65 aa).

It belongs to the bacterial ribosomal protein bL35 family.

In Synechococcus sp. (strain WH7803), this protein is Large ribosomal subunit protein bL35.